We begin with the raw amino-acid sequence, 299 residues long: 4-hydroxybenzoate octaprenyltransferase (299 aa).

A run of 8 helical transmembrane segments spans residues 33 to 53, 56 to 76, 105 to 125, 151 to 171, 180 to 200, 214 to 234, 247 to 267, and 278 to 298; these read VGFL…ADGV, WWTL…GCVI, NALL…LTMN, LPQV…FAAI, WLLY…YAMV, AILF…LMLL, HTYW…FIIA, and AFMH…LATT.

Belongs to the UbiA prenyltransferase family. Requires Mg(2+) as cofactor.

The protein localises to the cell inner membrane. It catalyses the reaction all-trans-octaprenyl diphosphate + 4-hydroxybenzoate = 4-hydroxy-3-(all-trans-octaprenyl)benzoate + diphosphate. It participates in cofactor biosynthesis; ubiquinone biosynthesis. In terms of biological role, catalyzes the prenylation of para-hydroxybenzoate (PHB) with an all-trans polyprenyl group. Mediates the second step in the final reaction sequence of ubiquinone-8 (UQ-8) biosynthesis, which is the condensation of the polyisoprenoid side chain with PHB, generating the first membrane-bound Q intermediate 3-octaprenyl-4-hydroxybenzoate. In Xylella fastidiosa (strain M23), this protein is 4-hydroxybenzoate octaprenyltransferase.